Here is a 603-residue protein sequence, read N- to C-terminus: F-box only protein 46 (603 aa).

Residues 20 to 63 (YSQNQPRPPSAALKPSACPEPGGGAEPDHGPAHSENTPPALATE) form a disordered region. Phosphoserine; by ATM is present on residues serine 21 and serine 67. 4 disordered regions span residues 111-163 (GGSR…PASA), 235-301 (EAQR…ARAK), 326-360 (LLAR…RDCG), and 396-440 (TVSP…AEGT). Residues 152–163 (GPPAAEEGPASA) show a composition bias toward low complexity. A Phosphoserine modification is found at serine 338. The residue at position 347 (threonine 347) is a Phosphothreonine. Composition is skewed to pro residues over residues 347-356 (TPPAPPPPPA) and 417-426 (DGPPEPPPAD). The F-box domain maps to 470–522 (RQYMLLLPEHVLVKIFSFLPTRALAALKCTCHHFKGIIEAFGVRATDSRWSRD).

In terms of assembly, part of a SCF (SKP1-cullin-F-box) protein ligase complex SCF(FBXO46) composed of CUL1, SKP1, RBX1 and FBXO46. Post-translationally, phosphorylated by ATM in response to DNA damage, promoting ubiquitination and degradation by the SCF(FBXO31) complex. In terms of processing, ATM-phosphorylated FBXO46 is ubiquitinated and degradaded by the SCF(FBXO31) complex in response to DNA damage.

It participates in protein modification; protein ubiquitination. In terms of biological role, substrate-recognition component of the SCF(FBXO46) protein ligase complex, which mediates the ubiquitination and degradation of target proteins. In absence of stress, the SCF(FBXO46) complex catalyzes ubiquitination and degradation of MTOR-phosphorylated FBXO31. In Homo sapiens (Human), this protein is F-box only protein 46.